The following is a 230-amino-acid chain: Large ribosomal subunit protein uL4 (230 aa).

A disordered region spans residues 59–113 (RQGTHATKTRGEVSGGGKKPYRQKGTGRARQGSTRAPQFTGGGTVHGPQPRDYSQ).

This sequence belongs to the universal ribosomal protein uL4 family. In terms of assembly, part of the 50S ribosomal subunit.

In terms of biological role, one of the primary rRNA binding proteins, this protein initially binds near the 5'-end of the 23S rRNA. It is important during the early stages of 50S assembly. It makes multiple contacts with different domains of the 23S rRNA in the assembled 50S subunit and ribosome. Forms part of the polypeptide exit tunnel. This is Large ribosomal subunit protein uL4 from Nocardia farcinica (strain IFM 10152).